The following is a 1032-amino-acid chain: Serine/threonine-protein kinase ppk31 (1032 aa).

One can recognise a PAS domain in the interval 3–72; it reads NPEQLKRILS…KATDNLFRKS (70 aa). A Protein kinase domain is found at 528-877; sequence FILLKEINRG…YQEIKKHPFF (350 aa). ATP contacts are provided by residues 534–542 and K557; that span reads INRGAYGRV. D652 serves as the catalytic Proton acceptor. The tract at residues 938–963 is disordered; sequence PKATPADSGTETSNSAAFSASEEETT. Positions 947–957 are enriched in low complexity; that stretch reads TETSNSAAFSA.

This sequence belongs to the protein kinase superfamily. Ser/Thr protein kinase family.

It is found in the cytoplasm. The catalysed reaction is L-seryl-[protein] + ATP = O-phospho-L-seryl-[protein] + ADP + H(+). It catalyses the reaction L-threonyl-[protein] + ATP = O-phospho-L-threonyl-[protein] + ADP + H(+). Its function is as follows. Has a role in meiosis. The protein is Serine/threonine-protein kinase ppk31 (ppk31) of Schizosaccharomyces pombe (strain 972 / ATCC 24843) (Fission yeast).